The chain runs to 492 residues: Putative methyl-accepting chemotaxis AlkN (492 aa).

A run of 2 helical transmembrane segments spans residues 9–29 and 159–179; these read FFLILVMAGFSFFVALFGMRL and YVYFLVVSINCLFFVVIFLLM. One can recognise an HAMP domain in the interval 180-231; sequence KKTRSSIDEIVHVMNDMSRGDLTYRTIPSNDEVGKMQSSIIAMGAGVSALIE. The Methyl-accepting transducer domain maps to 236 to 472; it reads IQGDLFNSAG…DMLDNANIIR (237 aa).

This sequence belongs to the methyl-accepting chemotaxis (MCP) protein family.

Its subcellular location is the membrane. Its pathway is hydrocarbon metabolism; alkane degradation. In terms of biological role, chemotactic-signal transducers respond to changes in the concentration of attractants and repellents in the environment, transduce a signal from the outside to the inside of the cell, and facilitate sensory adaptation through the variation of the level of methylation. The chain is Putative methyl-accepting chemotaxis AlkN (alkN) from Ectopseudomonas oleovorans (Pseudomonas oleovorans).